The chain runs to 305 residues: Virulence plasmid integrase pGP7-D (305 aa).

The 87-residue stretch at Leu-13–Tyr-99 folds into the Core-binding (CB) domain. In terms of domain architecture, Tyr recombinase spans Ile-127 to Leu-305. Residues Lys-188 and Arg-257 contribute to the active site. The active-site O-(3'-phospho-DNA)-tyrosine intermediate is Tyr-289.

The protein belongs to the 'phage' integrase family.

The sequence is that of Virulence plasmid integrase pGP7-D from Chlamydia trachomatis serovar L2 (strain ATCC VR-902B / DSM 19102 / 434/Bu).